Here is a 78-residue protein sequence, read N- to C-terminus: Major outer membrane lipoprotein Lpp 1 (78 aa).

Residues 1-20 (MNRTKLVLGAVILGSTLLAG) form the signal peptide. The N-palmitoyl cysteine moiety is linked to residue cysteine 21. Residue cysteine 21 is the site of S-diacylglycerol cysteine attachment. 2 consecutive repeats follow at residues 24–34 (NAKIDQLSSDV) and 38–48 (NAKVDQLSNDV). The stretch at 27-75 (IDQLSSDVQTLNAKVDQLSNDVNAMRSDVQAAKDDAARANQRLDNQATK) forms a coiled coil. The interval 56-78 (QAAKDDAARANQRLDNQATKYRK) is disordered. A compositionally biased stretch (polar residues) spans 68 to 78 (RLDNQATKYRK). An N6-murein peptidoglycan lysine modification is found at lysine 78.

It belongs to the Lpp family. Homotrimer.

The protein localises to the cell outer membrane. The protein resides in the secreted. Its subcellular location is the cell wall. In terms of biological role, a highly abundant outer membrane lipoprotein that controls the distance between the inner and outer membranes. The only protein known to be covalently linked to the peptidoglycan network (PGN). Also non-covalently binds the PGN. The link between the cell outer membrane and PGN contributes to maintenance of the structural and functional integrity of the cell envelope, and maintains the correct distance between the PGN and the outer membrane. In Salmonella paratyphi A (strain ATCC 9150 / SARB42), this protein is Major outer membrane lipoprotein Lpp 1.